The primary structure comprises 140 residues: Large ribosomal subunit protein uL11 (140 aa).

This sequence belongs to the universal ribosomal protein uL11 family. In terms of assembly, part of the ribosomal stalk of the 50S ribosomal subunit. Interacts with L10 and the large rRNA to form the base of the stalk. L10 forms an elongated spine to which L12 dimers bind in a sequential fashion forming a multimeric L10(L12)X complex. One or more lysine residues are methylated.

Forms part of the ribosomal stalk which helps the ribosome interact with GTP-bound translation factors. This Nitratidesulfovibrio vulgaris (strain DSM 19637 / Miyazaki F) (Desulfovibrio vulgaris) protein is Large ribosomal subunit protein uL11.